The primary structure comprises 555 residues: Formate--tetrahydrofolate ligase (555 aa).

65-72 (TPAGEGKT) contacts ATP.

This sequence belongs to the formate--tetrahydrofolate ligase family.

The enzyme catalyses (6S)-5,6,7,8-tetrahydrofolate + formate + ATP = (6R)-10-formyltetrahydrofolate + ADP + phosphate. The protein operates within one-carbon metabolism; tetrahydrofolate interconversion. The chain is Formate--tetrahydrofolate ligase from Caldanaerobacter subterraneus subsp. tengcongensis (strain DSM 15242 / JCM 11007 / NBRC 100824 / MB4) (Thermoanaerobacter tengcongensis).